A 209-amino-acid polypeptide reads, in one-letter code: Outer-membrane lipoprotein carrier protein (209 aa).

The N-terminal stretch at 1–22 is a signal peptide; it reads MKKLLLTLAMVPAVLFSPTAWG.

The protein belongs to the LolA family. Monomer.

It is found in the periplasm. In terms of biological role, participates in the translocation of lipoproteins from the inner membrane to the outer membrane. Only forms a complex with a lipoprotein if the residue after the N-terminal Cys is not an aspartate (The Asp acts as a targeting signal to indicate that the lipoprotein should stay in the inner membrane). The protein is Outer-membrane lipoprotein carrier protein of Alcanivorax borkumensis (strain ATCC 700651 / DSM 11573 / NCIMB 13689 / SK2).